A 58-amino-acid chain; its full sequence is ADVPGNYPLDKDGNTYTCLKLGENKDCQKVCKLHGVQYGYCYAFECWCKEYLDDKDSV.

The LCN-type CS-alpha/beta domain occupies 3-58 (VPGNYPLDKDGNTYTCLKLGENKDCQKVCKLHGVQYGYCYAFECWCKEYLDDKDSV). 3 cysteine pairs are disulfide-bonded: cysteine 18–cysteine 41, cysteine 27–cysteine 46, and cysteine 31–cysteine 48.

In terms of tissue distribution, expressed by the venom gland.

The protein resides in the secreted. In terms of biological role, binds to sodium channels (Nav) and affects the channel activation process. In mice, causes hyperactivity that persists until death. The polypeptide is Dortoxin (Parabuthus transvaalicus (Transvaal thick-tailed scorpion)).